The sequence spans 611 residues: Dihydroxy-acid dehydratase (611 aa).

Mg(2+) is bound at residue Asp-81. Cys-122 is a [2Fe-2S] cluster binding site. 2 residues coordinate Mg(2+): Asp-123 and Lys-124. Lys-124 is modified (N6-carboxylysine). Cys-195 contacts [2Fe-2S] cluster. A Mg(2+)-binding site is contributed by Glu-491. Ser-517 serves as the catalytic Proton acceptor.

Belongs to the IlvD/Edd family. As to quaternary structure, homodimer. [2Fe-2S] cluster serves as cofactor. The cofactor is Mg(2+).

The catalysed reaction is (2R)-2,3-dihydroxy-3-methylbutanoate = 3-methyl-2-oxobutanoate + H2O. It carries out the reaction (2R,3R)-2,3-dihydroxy-3-methylpentanoate = (S)-3-methyl-2-oxopentanoate + H2O. The protein operates within amino-acid biosynthesis; L-isoleucine biosynthesis; L-isoleucine from 2-oxobutanoate: step 3/4. It functions in the pathway amino-acid biosynthesis; L-valine biosynthesis; L-valine from pyruvate: step 3/4. In terms of biological role, functions in the biosynthesis of branched-chain amino acids. Catalyzes the dehydration of (2R,3R)-2,3-dihydroxy-3-methylpentanoate (2,3-dihydroxy-3-methylvalerate) into 2-oxo-3-methylpentanoate (2-oxo-3-methylvalerate) and of (2R)-2,3-dihydroxy-3-methylbutanoate (2,3-dihydroxyisovalerate) into 2-oxo-3-methylbutanoate (2-oxoisovalerate), the penultimate precursor to L-isoleucine and L-valine, respectively. The protein is Dihydroxy-acid dehydratase of Brucella anthropi (strain ATCC 49188 / DSM 6882 / CCUG 24695 / JCM 21032 / LMG 3331 / NBRC 15819 / NCTC 12168 / Alc 37) (Ochrobactrum anthropi).